A 105-amino-acid polypeptide reads, in one-letter code: UPF0235 protein RT0827 (105 aa).

Belongs to the UPF0235 family.

The polypeptide is UPF0235 protein RT0827 (Rickettsia typhi (strain ATCC VR-144 / Wilmington)).